A 403-amino-acid polypeptide reads, in one-letter code: Formate-dependent phosphoribosylglycinamide formyltransferase (403 aa).

Residues 27-28 (EL) and Glu-87 each bind N(1)-(5-phospho-beta-D-ribosyl)glycinamide. Residues Arg-120, Lys-161, 166 to 171 (SSGKGQ), 201 to 204 (EGFV), and Glu-209 each bind ATP. The region spanning 125 to 319 (RLAAEELGLP…EFELHARAIL (195 aa)) is the ATP-grasp domain. Mg(2+) is bound by residues Glu-278 and Glu-290. N(1)-(5-phospho-beta-D-ribosyl)glycinamide contacts are provided by residues Asp-297, Lys-366, and 373 to 374 (RR). The interval 382 to 403 (GPDVETARSRAREAASRVEPVA) is disordered. The span at 386 to 397 (ETARSRAREAAS) shows a compositional bias: basic and acidic residues.

Belongs to the PurK/PurT family. Homodimer.

The catalysed reaction is N(1)-(5-phospho-beta-D-ribosyl)glycinamide + formate + ATP = N(2)-formyl-N(1)-(5-phospho-beta-D-ribosyl)glycinamide + ADP + phosphate + H(+). Its pathway is purine metabolism; IMP biosynthesis via de novo pathway; N(2)-formyl-N(1)-(5-phospho-D-ribosyl)glycinamide from N(1)-(5-phospho-D-ribosyl)glycinamide (formate route): step 1/1. Functionally, involved in the de novo purine biosynthesis. Catalyzes the transfer of formate to 5-phospho-ribosyl-glycinamide (GAR), producing 5-phospho-ribosyl-N-formylglycinamide (FGAR). Formate is provided by PurU via hydrolysis of 10-formyl-tetrahydrofolate. This is Formate-dependent phosphoribosylglycinamide formyltransferase from Rhodococcus jostii (strain RHA1).